The chain runs to 75 residues: RNA-binding protein KhpA (75 aa).

Positions 29–75 (SIILELKVAPEDMGKVIGKQGRIAKAIRTVIKAAAVKENKRVVVEII) constitute a KH domain.

The protein belongs to the KhpA RNA-binding protein family. In terms of assembly, forms a complex with KhpB.

It is found in the cytoplasm. In terms of biological role, a probable RNA chaperone. Forms a complex with KhpB which binds to cellular RNA and controls its expression. Plays a role in peptidoglycan (PG) homeostasis and cell length regulation. The sequence is that of RNA-binding protein KhpA from Clostridium acetobutylicum (strain ATCC 824 / DSM 792 / JCM 1419 / IAM 19013 / LMG 5710 / NBRC 13948 / NRRL B-527 / VKM B-1787 / 2291 / W).